Here is a 1135-residue protein sequence, read N- to C-terminus: Exportin-6-A (1135 aa).

Residues 31–97 enclose the Importin N-terminal domain; that stretch reads IESLLNNFAQ…RNSLPKLLLS (67 aa).

Belongs to the exportin family. As to expression, expressed during meiotic maturation 2 hours after germinal vesicle break down (GVBD) and in unfertilized and fertilized eggs, but not in oocytes (at protein level). Expressed in somatic cells, in oocytes, during meiotic maturation and in unfertilized and fertilized eggs.

It localises to the nucleus. It is found in the cytoplasm. Functionally, mediates the nuclear export of actin and profilin-actin complexes in somatic cells. Oocyte nuclei lack active actin export. The polypeptide is Exportin-6-A (xpo6-a) (Xenopus laevis (African clawed frog)).